Consider the following 410-residue polypeptide: MHLQRALVVLALLNLATISLSLSTCTTLDFGHIKKKRVEAIRGQILSKLRLTSPPEPSVMTHVPYQVLALYNSTRELLEEMHGEREEGCTQETSESEYYAKEIHKFDMIQGLAEHNELAVCPKGITSKVFRFNVSSVEKNGTNLFRAEFRVLRVPNPSSKRTEQRIELFQILRPDEHIAKQRYIGGKNLPTRGTAEWLSFDVTDTVREWLLRRESNLGLEISIHCPCHTFQPNGDILENVHEVMEIKFKGVDNEDDHGRGDLGRLKKQKDHHNPHLILMMIPPHRLDSPGQGSQRKKRALDTNYCFRNLEENCCVRPLYIDFRQDLGWKWVHEPKGYYANFCSGPCPYLRSADTTHSTVLGLYNTLNPEASASPCCVPQDLEPLTILYYVGRTPKVEQLSNMVVKSCKCS.

The first 23 residues, 1–23 (MHLQRALVVLALLNLATISLSLS), serve as a signal peptide directing secretion. 3 N-linked (GlcNAc...) asparagine glycosylation sites follow: asparagine 72, asparagine 133, and asparagine 140. The Cell attachment site motif lies at 259–261 (RGD). An N5-methylglutamine modification is found at glutamine 291. 4 disulfides stabilise this stretch: cysteine 305/cysteine 314, cysteine 313/cysteine 376, cysteine 342/cysteine 407, and cysteine 346/cysteine 409.

It belongs to the TGF-beta family. In terms of assembly, interacts with ASPN. Latency-associated peptide: Homodimer; disulfide-linked. Latency-associated peptide: Interacts with Transforming growth factor beta-3 (TGF-beta-3) chain; interaction is non-covalent and maintains (TGF-beta-3) in a latent state. Latency-associated peptide: Interacts with LRRC32/GARP; leading to regulate activation of TGF-beta-3 and promote epithelial fusion during palate development. Latency-associated peptide: Interacts (via cell attachment site) with integrins, leading to release of the active TGF-beta-3. Transforming growth factor beta-3: Homodimer; disulfide-linked. Transforming growth factor beta-3: Interacts with TGF-beta receptors (TGFBR1 and TGFBR2), leading to signal transduction. Transforming growth factor beta-3 proprotein: The precursor proprotein is cleaved in the Golgi apparatus to form Transforming growth factor beta-3 (TGF-beta-3) and Latency-associated peptide (LAP) chains, which remain non-covalently linked, rendering TGF-beta-3 inactive. Post-translationally, methylated at Gln-291 by N6AMT1. As to expression, expressed in mammary glands with a slight increase in expression prior to lactation and again increasing at the onset of involution, expression peaks at day 3 of involution.

It is found in the secreted. The protein localises to the extracellular space. It localises to the extracellular matrix. Functionally, transforming growth factor beta-3 proprotein: Precursor of the Latency-associated peptide (LAP) and Transforming growth factor beta-3 (TGF-beta-3) chains, which constitute the regulatory and active subunit of TGF-beta-3, respectively. In terms of biological role, required to maintain the Transforming growth factor beta-3 (TGF-beta-3) chain in a latent state during storage in extracellular matrix. Associates non-covalently with TGF-beta-3 and regulates its activation via interaction with 'milieu molecules', such as LTBP1 and LRRC32/GARP, that control activation of TGF-beta-3. Interaction with integrins results in distortion of the Latency-associated peptide chain and subsequent release of the active TGF-beta-3. Its function is as follows. Transforming growth factor beta-3: Multifunctional protein that regulates embryogenesis and cell differentiation and is required in various processes such as secondary palate development. Activation into mature form follows different steps: following cleavage of the proprotein in the Golgi apparatus, Latency-associated peptide (LAP) and Transforming growth factor beta-3 (TGF-beta-3) chains remain non-covalently linked rendering TGF-beta-3 inactive during storage in extracellular matrix. At the same time, LAP chain interacts with 'milieu molecules', such as LTBP1 and LRRC32/GARP that control activation of TGF-beta-3 and maintain it in a latent state during storage in extracellular milieus. TGF-beta-3 is released from LAP by integrins: integrin-binding results in distortion of the LAP chain and subsequent release of the active TGF-beta-3. Once activated following release of LAP, TGF-beta-3 acts by binding to TGF-beta receptors (TGFBR1 and TGFBR2), which transduce signal. The protein is Transforming growth factor beta-3 proprotein of Mus musculus (Mouse).